The sequence spans 123 residues: UPF0102 protein CLM_2733 (123 aa).

The protein belongs to the UPF0102 family.

In Clostridium botulinum (strain Kyoto / Type A2), this protein is UPF0102 protein CLM_2733.